A 276-amino-acid polypeptide reads, in one-letter code: NADPH-dependent 7-cyano-7-deazaguanine reductase (276 aa).

A substrate-binding site is contributed by 83–85; sequence IES. 85–86 lines the NADPH pocket; sequence SK. The Thioimide intermediate role is filled by cysteine 184. The active-site Proton donor is aspartate 191. 223 to 224 contributes to the substrate binding site; the sequence is HE. Residue 252 to 253 coordinates NADPH; sequence RG.

It belongs to the GTP cyclohydrolase I family. QueF type 2 subfamily. Homodimer.

It localises to the cytoplasm. The catalysed reaction is 7-aminomethyl-7-carbaguanine + 2 NADP(+) = 7-cyano-7-deazaguanine + 2 NADPH + 3 H(+). The protein operates within tRNA modification; tRNA-queuosine biosynthesis. Its function is as follows. Catalyzes the NADPH-dependent reduction of 7-cyano-7-deazaguanine (preQ0) to 7-aminomethyl-7-deazaguanine (preQ1). This is NADPH-dependent 7-cyano-7-deazaguanine reductase from Pseudomonas putida (strain W619).